A 72-amino-acid polypeptide reads, in one-letter code: U-actitoxin-Aeq5b (72 aa).

Residues 1–20 (MNQVMTIFLVLGVIVYSVES) form the signal peptide. 4 disulfides stabilise this stretch: Cys-33–Cys-71, Cys-37–Cys-66, Cys-44–Cys-59, and Cys-50–Cys-56.

The protein belongs to the Acrorhagin I family. Expressed by acrorhagi.

It localises to the secreted. The protein localises to the nematocyst. Toxin that is lethal to crab. It interacts with divalent metal ions (zinc and nickel) suggesting it may function as a metal ion chelator to regulate metal ion levels or as a metal ion transporter, or that its function is modulated by metal ions. Is not active against any of the voltage-gated potassium and sodium channels tested. In addition, it does not show activity in bacterial and fungal growth inhibitory assays as well as in hemolytic assays. The protein is U-actitoxin-Aeq5b of Actinia equina (Beadlet anemone).